The following is a 295-amino-acid chain: Indole-3-glycerol phosphate synthase (295 aa).

Belongs to the TrpC family.

The enzyme catalyses 1-(2-carboxyphenylamino)-1-deoxy-D-ribulose 5-phosphate + H(+) = (1S,2R)-1-C-(indol-3-yl)glycerol 3-phosphate + CO2 + H2O. Its pathway is amino-acid biosynthesis; L-tryptophan biosynthesis; L-tryptophan from chorismate: step 4/5. The chain is Indole-3-glycerol phosphate synthase from Prochlorococcus marinus (strain NATL1A).